A 349-amino-acid chain; its full sequence is MSKSKDDAPHELESQFILRLPPEYASTVRRAVQSGHVNLKDRLTIELHPDGRHGIVRVDRVPLASKLVDLPCVMESLKTIDKKTFYKTADICQMLVSTVDGDLYPPVEEPVASTDPKASKKKDKDKEKKFIWNHGITLPLKNVRKRRFRKTAKKKYIESPDVEKEVKRLLSTDAEAVSTRWEIIAEDETKEAENQGLDISSPGMSGHRQGHDSLEHDELREIFNDLSSSSEDEDETQHQDEEDINIIDTEEDLERQLQDKLNESDEQHQENEGTNQLVMGIQKQIDNMKGKLQETQDRAKRQEDLIMKVENLALKNRFQAVLDELKQKEDREKEQLSSLQEELESLLEK.

A [KR]-[STA]-K motif motif is present at residues 3–5; that stretch reads KSK. Positions 105-126 are disordered; the sequence is PPVEEPVASTDPKASKKKDKDK. Ser-171, Ser-200, Ser-201, and Ser-213 each carry phosphoserine. The disordered stretch occupies residues 186–212; it reads EDETKEAENQGLDISSPGMSGHRQGHD. Residues 227–247 are disordered; it reads SSSSEDEDETQHQDEEDINII. A compositionally biased stretch (acidic residues) spans 230–247; that stretch reads SEDEDETQHQDEEDINII. Residues 244–349 adopt a coiled-coil conformation; sequence INIIDTEEDL…QEELESLLEK (106 aa). Position 264 is a phosphoserine (Ser-264). The tract at residues 328–349 is disordered; it reads KEDREKEQLSSLQEELESLLEK.

Belongs to the TAF7 family. As to quaternary structure, component of the TFIID basal transcription factor complex, composed of TATA-box-binding protein TBP, and a number of TBP-associated factors (TAFs), including TAF1, TAF2, TAF3, TAF4, TAF5, TAF6, TAF7, TAF8, TAF9, TAF10, TAF11, TAF12 and TAF13. Part of a TFIID-containing RNA polymerase II pre-initiation complex that is composed of TBP and at least GTF2A1, GTF2A2, GTF2E1, GTF2E2, GTF2F1, GTF2H2, GTF2H3, GTF2H4, GTF2H5, GTF2B, TCEA1, ERCC2, ERCC3, TAF1, TAF2, TAF3, TAF4, TAF5, TAF6, TAF7, TAF8, TAF9, TAF10, TAF11, TAF12 and TAF13. Interacts with TAF1; the interaction is direct. Interacts with TAF1, TAF5, TAF11, TAF12, and TAF13, but not with TAF10 or TBP. Component of some MLL1/MLL complex, at least composed of the core components KMT2A/MLL1, ASH2L, HCFC1/HCF1, WDR5 and RBBP5, as well as the facultative components BACC1, CHD8, E2F6, HSP70, INO80C, KANSL1, LAS1L, MAX, MCRS1, MGA, MYST1/MOF, PELP1, PHF20, PRP31, RING2, RUVB1/TIP49A, RUVB2/TIP49B, SENP3, TAF1, TAF4, TAF6, TAF7, TAF9 and TEX10. Interacts with CIITA and TAF1 and inhibits their acetyltransferase activity, and behaving as a repressor of CIITA- and TAF1-regulated promoters. Post-translationally, phosphorylated by CIITA. Phosphorylation at Ser-264 by TAF1 in early G1 phase disrupts binding to TAF1. Ubiquitinated by TRIM26; leading to proteasomal degradation. Ubiquitous.

It localises to the nucleus. Its function is as follows. The TFIID basal transcription factor complex plays a major role in the initiation of RNA polymerase II (Pol II)-dependent transcription. TFIID recognizes and binds promoters with or without a TATA box via its subunit TBP, a TATA-box-binding protein, and promotes assembly of the pre-initiation complex (PIC). The TFIID complex consists of TBP and TBP-associated factors (TAFs), including TAF1, TAF2, TAF3, TAF4, TAF5, TAF6, TAF7, TAF8, TAF9, TAF10, TAF11, TAF12 and TAF13. TAF7 forms a promoter DNA binding subcomplex of TFIID, together with TAF1 and TAF2. Part of a TFIID complex containing TAF10 (TFIID alpha) and a TFIID complex lacking TAF10 (TFIID beta). The protein is Transcription initiation factor TFIID subunit 7 (TAF7) of Homo sapiens (Human).